We begin with the raw amino-acid sequence, 118 residues long: Pterin-4-alpha-carbinolamine dehydratase (118 aa).

It belongs to the pterin-4-alpha-carbinolamine dehydratase family.

The enzyme catalyses (4aS,6R)-4a-hydroxy-L-erythro-5,6,7,8-tetrahydrobiopterin = (6R)-L-erythro-6,7-dihydrobiopterin + H2O. Its function is as follows. Involved in tetrahydrobiopterin biosynthesis. Seems to both prevent the formation of 7-pterins and accelerate the formation of quinonoid-BH2. May also have a positive regulatory role in the expression of phhA. In Pseudomonas syringae pv. tomato (strain ATCC BAA-871 / DC3000), this protein is Pterin-4-alpha-carbinolamine dehydratase (phhB).